We begin with the raw amino-acid sequence, 1372 residues long: Capping protein, Arp2/3 and myosin-I linker protein 3 (1372 aa).

Residues 126 to 151 (RGNADTPEGPRDTSPNSETSTSTTHS) form a disordered region. Over residues 138 to 151 (TSPNSETSTSTTHS) the composition is skewed to low complexity. 10 LRR repeats span residues 244-264 (SLEE…QKLA), 274-295 (VLHA…SLSQ), 303-323 (GLTK…QALG), 335-357 (SLRY…NALY), 365-385 (ALVH…LGAL), 392-413 (HLTY…EAPP), 424-444 (TLSH…RALL), 455-475 (DLHL…ALQE), 482-501 (CVGS…LTLV), and 509-530 (SLKH…EEIL). 3 disordered regions span residues 865-900 (TLSD…ELGT), 970-1003 (KLRH…RQEN), and 1024-1372 (ESSS…PGTD). Residues 982–995 (PRTTPPGPGRPSMP) are compositionally biased toward pro residues. Positions 1040–1073 (SEAPLPPLQKKRRRGLFHFRRPRSFKGDRGPGSP) are necessary for localization at the cell membrane. The segment covering 1048-1063 (QKKRRRGLFHFRRPRS) has biased composition (basic residues). Positions 1079 to 1098 (LPPPPPPPPTQESPPSPDPP) are enriched in pro residues. Residues 1099-1109 (SLGNNSSPCWS) show a composition bias toward low complexity. Composition is skewed to basic and acidic residues over residues 1163-1177 (ERAK…REGP) and 1219-1229 (RRAEATWHIAE). Positions 1233-1244 (PNHSCQSPSPAS) are enriched in polar residues. Residues 1348–1361 (QSCDKLEPDRRRPP) are compositionally biased toward basic and acidic residues.

The protein belongs to the CARMIL family. In terms of tissue distribution, widely expressed, with much higher levels in fetal tissues than in adult ones. Up-regulated in certain cancer tissues.

It is found in the cytoplasm. Its subcellular location is the cell membrane. The protein is Capping protein, Arp2/3 and myosin-I linker protein 3 of Homo sapiens (Human).